We begin with the raw amino-acid sequence, 235 residues long: Large ribosomal subunit protein uL1 (235 aa).

It belongs to the universal ribosomal protein uL1 family. In terms of assembly, part of the 50S ribosomal subunit.

Functionally, binds directly to 23S rRNA. The L1 stalk is quite mobile in the ribosome, and is involved in E site tRNA release. In terms of biological role, protein L1 is also a translational repressor protein, it controls the translation of the L11 operon by binding to its mRNA. This Renibacterium salmoninarum (strain ATCC 33209 / DSM 20767 / JCM 11484 / NBRC 15589 / NCIMB 2235) protein is Large ribosomal subunit protein uL1.